The chain runs to 283 residues: DegV domain-containing protein BH3627 (283 aa).

In terms of domain architecture, DegV spans 4–281; the sequence is IAIVTDSTAY…EGSIGLSWYI (278 aa). The hexadecanoate site is built by T62 and S95.

May bind long-chain fatty acids, such as palmitate, and may play a role in lipid transport or fatty acid metabolism. In Halalkalibacterium halodurans (strain ATCC BAA-125 / DSM 18197 / FERM 7344 / JCM 9153 / C-125) (Bacillus halodurans), this protein is DegV domain-containing protein BH3627.